A 337-amino-acid polypeptide reads, in one-letter code: MKVRVGINGFGRMGRLALRAAWDWPELEFVHINEIKGGAVAAAHLLKFDSVHGRWTPEVEAEGERVLIDGTPLSFSEYGKPDDVPWEDFGVDLVLECSGKFRTPATLDPYFKRGVQKVIVAAPVKEEALNIVMGVNDYLYEPEKHHLLTAASCTTNCLAPVVKVIHEGLGIKHGIITTIHDNTNTQTLVDAPHKDLRRARATSLSLIPTTTGSATAIALIYPELKGKLNGIAVRVPLLNASLTDCVFEVTRPTTVEEINALLKAASEQAPLQGILGYEERPLVSIDYKDDPRSSIIDALSTMVVDETQVKILAWYDNEWGYVNRMVELARKVALSLK.

Residues 12–13 and Lys80 each bind NAD(+); that span reads RM. D-glyceraldehyde 3-phosphate contacts are provided by residues 152–154 and Thr183; that span reads SCT. The active-site Nucleophile is the Cys153. Asn184 contributes to the NAD(+) binding site. Residues Arg198, 211–212, and Arg234 contribute to the D-glyceraldehyde 3-phosphate site; that span reads TG. Asn317 provides a ligand contact to NAD(+).

It belongs to the glyceraldehyde-3-phosphate dehydrogenase family. In terms of assembly, homotetramer.

Its subcellular location is the cytoplasm. It catalyses the reaction D-glyceraldehyde 3-phosphate + phosphate + NAD(+) = (2R)-3-phospho-glyceroyl phosphate + NADH + H(+). The protein operates within carbohydrate degradation; glycolysis; pyruvate from D-glyceraldehyde 3-phosphate: step 1/5. Its pathway is carbohydrate biosynthesis; gluconeogenesis. Its function is as follows. Catalyzes the oxidative phosphorylation of glyceraldehyde 3-phosphate (G3P) to 1,3-bisphosphoglycerate (BPG) using the cofactor NAD. The first reaction step involves the formation of a hemiacetal intermediate between G3P and a cysteine residue, and this hemiacetal intermediate is then oxidized to a thioester, with concomitant reduction of NAD to NADH. The reduced NADH is then exchanged with the second NAD, and the thioester is attacked by a nucleophilic inorganic phosphate to produce BPG. The protein is Glyceraldehyde-3-phosphate dehydrogenase 3 (gap3) of Nostoc sp. (strain PCC 7120 / SAG 25.82 / UTEX 2576).